The sequence spans 597 residues: Hydrogenase-1 large chain (597 aa).

Residues Cys76, Cys79, Cys576, and Cys579 each coordinate Ni(2+).

This sequence belongs to the [NiFe]/[NiFeSe] hydrogenase large subunit family. As to quaternary structure, heterodimer of a large and a small subunit. Requires Ni(2+) as cofactor.

Its subcellular location is the cell membrane. The enzyme catalyses H2 + A = AH2. The protein is Hydrogenase-1 large chain (hyaB) of Citrobacter freundii.